We begin with the raw amino-acid sequence, 491 residues long: Cytosolic Fe-S cluster assembly factor NAR1 (491 aa).

Positions 20, 59, 62, 65, 177, 231, 412, and 416 each coordinate [4Fe-4S] cluster.

Belongs to the NARF family. As to quaternary structure, interacts with CIA1.

Functionally, component of the cytosolic Fe/S protein assembly machinery. Required for maturation of extramitochondrial Fe/S proteins. May play a role in the transfer of pre-assembled Fe/S clusters to target apoproteins. The polypeptide is Cytosolic Fe-S cluster assembly factor NAR1 (NAR1) (Saccharomyces cerevisiae (strain YJM789) (Baker's yeast)).